The chain runs to 159 residues: Ecotin (159 aa).

Residues 1-22 form the signal peptide; it reads MRPTPLSTILALTMAATAPAMA. A disulfide bridge connects residues cysteine 68 and cysteine 105.

The protein belongs to the protease inhibitor I11 (ecotin) family. In terms of assembly, homodimer.

The protein localises to the periplasm. Its function is as follows. General inhibitor of family S1 serine proteases. The chain is Ecotin from Pseudomonas putida (strain W619).